We begin with the raw amino-acid sequence, 358 residues long: Ubiquitin thioesterase OTU1 (358 aa).

The Ubiquitin-like domain maps to 5-87 (FSVKLKSKKG…LIVEEKAGAA (83 aa)). The UBX-like stretch occupies residues 8–94 (KLKSKKGQFI…GAAGPTSTPL (87 aa)). Positions 83–108 (KAGAAGPTSTPLASGSGSSTMEDDEA) are disordered. The segment covering 89-102 (PTSTPLASGSGSST) has biased composition (polar residues). The region spanning 161–285 (LLKKVVPADN…GIHYDPLYME (125 aa)) is the OTU domain. Residues 166–172 (VPADNSC) are cys-loop. Residue Asp169 is part of the active site. Cys172 acts as the Nucleophile in catalysis. The interval 224–234 (IQKADSWGGAI) is variable-loop. The interval 274–278 (FDGIH) is his-loop. Ile277 serves as a coordination point for substrate. Residue His278 is part of the active site. An S2 site region spans residues 301-306 (MGVYQQ). A C2H2-type zinc finger spans residues 328–352 (LRCMDCDVMLVGQGQAQEHAKKTGH). The active site involves His352.

The enzyme catalyses Thiol-dependent hydrolysis of ester, thioester, amide, peptide and isopeptide bonds formed by the C-terminal Gly of ubiquitin (a 76-residue protein attached to proteins as an intracellular targeting signal).. Hydrolase that can remove conjugated ubiquitin from proteins and may therefore play an important regulatory role at the level of protein turnover by preventing degradation. The chain is Ubiquitin thioesterase OTU1 from Drosophila pseudoobscura pseudoobscura (Fruit fly).